The primary structure comprises 455 residues: Probable glycine dehydrogenase (decarboxylating) subunit 1 (455 aa).

This sequence belongs to the GcvP family. N-terminal subunit subfamily. The glycine cleavage system is composed of four proteins: P, T, L and H. In this organism, the P 'protein' is a heterodimer of two subunits.

The enzyme catalyses N(6)-[(R)-lipoyl]-L-lysyl-[glycine-cleavage complex H protein] + glycine + H(+) = N(6)-[(R)-S(8)-aminomethyldihydrolipoyl]-L-lysyl-[glycine-cleavage complex H protein] + CO2. Functionally, the glycine cleavage system catalyzes the degradation of glycine. The P protein binds the alpha-amino group of glycine through its pyridoxal phosphate cofactor; CO(2) is released and the remaining methylamine moiety is then transferred to the lipoamide cofactor of the H protein. In Francisella tularensis subsp. tularensis (strain FSC 198), this protein is Probable glycine dehydrogenase (decarboxylating) subunit 1.